Reading from the N-terminus, the 278-residue chain is Dermonecrotic toxin LspiSicTox-betaIE2i (278 aa).

Residue H5 is part of the active site. The Mg(2+) site is built by E25 and D27. The active-site Nucleophile is H41. 2 disulfide bridges follow: C45–C51 and C47–C190. A Mg(2+)-binding site is contributed by E85.

The protein belongs to the arthropod phospholipase D family. Class II subfamily. Mg(2+) serves as cofactor. As to expression, expressed by the venom gland.

The protein localises to the secreted. It carries out the reaction an N-(acyl)-sphingosylphosphocholine = an N-(acyl)-sphingosyl-1,3-cyclic phosphate + choline. The enzyme catalyses an N-(acyl)-sphingosylphosphoethanolamine = an N-(acyl)-sphingosyl-1,3-cyclic phosphate + ethanolamine. The catalysed reaction is a 1-acyl-sn-glycero-3-phosphocholine = a 1-acyl-sn-glycero-2,3-cyclic phosphate + choline. It catalyses the reaction a 1-acyl-sn-glycero-3-phosphoethanolamine = a 1-acyl-sn-glycero-2,3-cyclic phosphate + ethanolamine. In terms of biological role, dermonecrotic toxins cleave the phosphodiester linkage between the phosphate and headgroup of certain phospholipids (sphingolipid and lysolipid substrates), forming an alcohol (often choline) and a cyclic phosphate. This toxin acts on sphingomyelin (SM). It may also act on ceramide phosphoethanolamine (CPE), lysophosphatidylcholine (LPC) and lysophosphatidylethanolamine (LPE), but not on lysophosphatidylserine (LPS), and lysophosphatidylglycerol (LPG). It acts by transphosphatidylation, releasing exclusively cyclic phosphate products as second products. Induces dermonecrosis, hemolysis, increased vascular permeability, edema, inflammatory response, and platelet aggregation. The protein is Dermonecrotic toxin LspiSicTox-betaIE2i of Loxosceles spinulosa (Recluse spider).